Consider the following 506-residue polypeptide: 2,3-bisphosphoglycerate-independent phosphoglycerate mutase (506 aa).

Mn(2+) contacts are provided by D13 and S63. S63 serves as the catalytic Phosphoserine intermediate. Residues H124, 153–154 (RD), R183, R189, 254–257 (RADR), and K330 contribute to the substrate site. D396, H400, D437, H438, and H456 together coordinate Mn(2+).

It belongs to the BPG-independent phosphoglycerate mutase family. In terms of assembly, monomer. Requires Mn(2+) as cofactor.

The enzyme catalyses (2R)-2-phosphoglycerate = (2R)-3-phosphoglycerate. The protein operates within carbohydrate degradation; glycolysis; pyruvate from D-glyceraldehyde 3-phosphate: step 3/5. In terms of biological role, catalyzes the interconversion of 2-phosphoglycerate and 3-phosphoglycerate. The sequence is that of 2,3-bisphosphoglycerate-independent phosphoglycerate mutase from Cereibacter sphaeroides (strain KD131 / KCTC 12085) (Rhodobacter sphaeroides).